We begin with the raw amino-acid sequence, 145 residues long: Ribonuclease H (145 aa).

Residues 1–142 enclose the RNase H type-1 domain; it reads MKEVVIYTDG…CDEIARSMIK (142 aa). The Mg(2+) site is built by Asp9, Glu47, Asp69, and Asp134.

The protein belongs to the RNase H family. Monomer. Mg(2+) is required as a cofactor.

The protein resides in the cytoplasm. It catalyses the reaction Endonucleolytic cleavage to 5'-phosphomonoester.. Its function is as follows. Endonuclease that specifically degrades the RNA of RNA-DNA hybrids. The sequence is that of Ribonuclease H from Caldicellulosiruptor saccharolyticus (strain ATCC 43494 / DSM 8903 / Tp8T 6331).